The primary structure comprises 300 residues: MGPYLSQPKRDKTTTTGQGKSVIFAASEMQGWRNTMEDAHIHRPDIIQDVSVFGVFDGHGGREVAQFVEKHFVDELLKNKNFKEQKFEEALKETFLKMDELLLTPEGQKELNQYKATDTDESYAGCTANVALIYKNTLYVANAGDSRSVLCRNNTNHDMSVDHKPDNPEEKSRIERAGGFVSDGRVNGNLNLSRALGDLEYKRDNKLRSNEQLIIALPDVKKTELTPQDKFILMGCDGVFETLNHQELLKQVNSTIGQAQVTEELLKKAAEDLLDQLLAPDTSQGTGCDNMTTILVYLRR.

The PPM-type phosphatase domain maps to 23–298 (IFAASEMQGW…DNMTTILVYL (276 aa)). 4 residues coordinate Mn(2+): Asp57, Gly58, Asp237, and Asp289.

Belongs to the PP2C family. Mg(2+) serves as cofactor. The cofactor is Mn(2+). Post-translationally, the N-terminus is blocked.

It localises to the membrane. It carries out the reaction O-phospho-L-seryl-[protein] + H2O = L-seryl-[protein] + phosphate. It catalyses the reaction O-phospho-L-threonyl-[protein] + H2O = L-threonyl-[protein] + phosphate. Serine and threonine phosphatase. This Paramecium tetraurelia protein is Protein phosphatase 2C 1.